Consider the following 286-residue polypeptide: Eukaryotic translation initiation factor 3 subunit F-2 (286 aa).

One can recognise an MPN domain in the interval 11 to 147; it reads ILLQPLVLLH…MRLYTAVVMG (137 aa).

This sequence belongs to the eIF-3 subunit F family. As to quaternary structure, component of the eukaryotic translation initiation factor 3 (eIF-3) complex. The eIF-3 complex interacts with pix.

It is found in the cytoplasm. In terms of biological role, component of the eukaryotic translation initiation factor 3 (eIF-3) complex, which is involved in protein synthesis of a specialized repertoire of mRNAs and, together with other initiation factors, stimulates binding of mRNA and methionyl-tRNAi to the 40S ribosome. The eIF-3 complex specifically targets and initiates translation of a subset of mRNAs involved in cell proliferation. The protein is Eukaryotic translation initiation factor 3 subunit F-2 of Drosophila willistoni (Fruit fly).